The primary structure comprises 356 residues: Cytochrome b translation regulator cbp7 (356 aa).

In terms of assembly, component of a complex, at least composed of cbp7 and cbp8.

The protein localises to the mitochondrion. In terms of biological role, translation factor for cob1/cytochrome b; plays a role in cob1 mRNA stabilization and required for correct folding of the protein. The protein is Cytochrome b translation regulator cbp7 of Schizosaccharomyces pombe (strain 972 / ATCC 24843) (Fission yeast).